A 260-amino-acid polypeptide reads, in one-letter code: Acetylglutamate kinase (260 aa).

Residues 45-46 (GG), Arg-67, and Asn-159 contribute to the substrate site.

Belongs to the acetylglutamate kinase family. ArgB subfamily.

The protein localises to the cytoplasm. The enzyme catalyses N-acetyl-L-glutamate + ATP = N-acetyl-L-glutamyl 5-phosphate + ADP. Its pathway is amino-acid biosynthesis; L-arginine biosynthesis; N(2)-acetyl-L-ornithine from L-glutamate: step 2/4. Catalyzes the ATP-dependent phosphorylation of N-acetyl-L-glutamate. This Aliivibrio fischeri (strain ATCC 700601 / ES114) (Vibrio fischeri) protein is Acetylglutamate kinase.